The chain runs to 236 residues: OPEP-2 protein (236 aa).

The chain is OPEP-2 protein (OPEP-2) from Orgyia pseudotsugata (Douglas-fir tussock moth).